Reading from the N-terminus, the 137-residue chain is Small ribosomal subunit protein uS12 (137 aa).

The disordered stretch occupies residues 1–55 (MPTINQLVRKPRQSKSKKSDSPALNRNFNSKKKKFTDLNSPQKRGVCTRVGTMTP). Asp102 is modified (3-methylthioaspartic acid). Residues 118-137 (SGVDGRRQGRSLYGTKKPKK) form a disordered region.

Belongs to the universal ribosomal protein uS12 family. Part of the 30S ribosomal subunit. Contacts proteins S8 and S17. May interact with IF1 in the 30S initiation complex.

In terms of biological role, with S4 and S5 plays an important role in translational accuracy. Its function is as follows. Interacts with and stabilizes bases of the 16S rRNA that are involved in tRNA selection in the A site and with the mRNA backbone. Located at the interface of the 30S and 50S subunits, it traverses the body of the 30S subunit contacting proteins on the other side and probably holding the rRNA structure together. The combined cluster of proteins S8, S12 and S17 appears to hold together the shoulder and platform of the 30S subunit. This chain is Small ribosomal subunit protein uS12, found in Staphylococcus saprophyticus subsp. saprophyticus (strain ATCC 15305 / DSM 20229 / NCIMB 8711 / NCTC 7292 / S-41).